The sequence spans 108 residues: UPF0145 protein Ava_0420 (108 aa).

Belongs to the UPF0145 family.

The chain is UPF0145 protein Ava_0420 from Trichormus variabilis (strain ATCC 29413 / PCC 7937) (Anabaena variabilis).